Reading from the N-terminus, the 108-residue chain is Thioredoxin (108 aa).

Residues serine 2–leucine 108 enclose the Thioredoxin domain. The cysteines at positions 33 and 36 are disulfide-linked.

It belongs to the thioredoxin family.

In terms of biological role, component of the thioredoxin-thioredoxin reductase system. Participates in various redox reactions through the reversible oxidation of its active center dithiol to a disulfide and catalyzes dithiol-disulfide exchange reactions. This chain is Thioredoxin (trxA), found in Acidithiobacillus ferridurans.